Here is a 305-residue protein sequence, read N- to C-terminus: P2Y purinoceptor 14 (305 aa).

At M1–Y29 the chain is on the extracellular side. Residue N3 is glycosylated (N-linked (GlcNAc...) asparagine). Residues C30 to V50 traverse the membrane as a helical segment. Residues P51–S55 lie on the Cytoplasmic side of the membrane. The chain crosses the membrane as a helical span at residues F56–F76. The Extracellular portion of the chain corresponds to K77–V96. Residues S97 to F117 form a helical membrane-spanning segment. Over D118–K139 the chain is Cytoplasmic. Residues V140–T160 form a helical membrane-spanning segment. A glycan (N-linked (GlcNAc...) asparagine) is linked at N161. The Extracellular segment spans residues N161 to N188. The helical transmembrane segment at Y189–I209 threads the bilayer. At T210–N234 the chain is on the cytoplasmic side. The helical transmembrane segment at I235–P255 threads the bilayer. At Y256–E278 the chain is on the extracellular side. The helical transmembrane segment at F279–A299 threads the bilayer. Residues S300–S305 are Cytoplasmic-facing.

It belongs to the G-protein coupled receptor 1 family.

It localises to the cell membrane. Receptor for UDP-glucose coupled to G-proteins. In Rattus norvegicus (Rat), this protein is P2Y purinoceptor 14 (P2ry14).